Reading from the N-terminus, the 475-residue chain is Chemotaxis protein MotD (475 aa).

Disordered stretches follow at residues 1–175 (MRPL…PVGG), 195–243 (LQPE…SEPD), and 408–475 (GDSA…HVYM). The segment covering 9-22 (RTSAASRPAQSLSV) has biased composition (polar residues). Over residues 79 to 100 (ADVPASMADAASPDARPASERA) the composition is skewed to low complexity. Residues 143–155 (HSRETVHALRDAI) are compositionally biased toward basic and acidic residues. The segment covering 408-417 (GDSASGGGGQ) has biased composition (gly residues). Basic and acidic residues predominate over residues 427 to 449 (EGRERAGDDGQGRQPRDGGRAAT).

Its subcellular location is the cytoplasm. In terms of biological role, required for the rotation of the flagellar motor. Has a positive effect as flagellar rotation increases when an excess of motd is present. The chain is Chemotaxis protein MotD (motD) from Rhizobium meliloti (Ensifer meliloti).